The sequence spans 317 residues: Transaldolase (317 aa).

K126 acts as the Schiff-base intermediate with substrate in catalysis.

This sequence belongs to the transaldolase family. Type 1 subfamily. As to quaternary structure, homodimer.

The protein resides in the cytoplasm. The enzyme catalyses D-sedoheptulose 7-phosphate + D-glyceraldehyde 3-phosphate = D-erythrose 4-phosphate + beta-D-fructose 6-phosphate. It functions in the pathway carbohydrate degradation; pentose phosphate pathway; D-glyceraldehyde 3-phosphate and beta-D-fructose 6-phosphate from D-ribose 5-phosphate and D-xylulose 5-phosphate (non-oxidative stage): step 2/3. Functionally, transaldolase is important for the balance of metabolites in the pentose-phosphate pathway. The protein is Transaldolase of Burkholderia lata (strain ATCC 17760 / DSM 23089 / LMG 22485 / NCIMB 9086 / R18194 / 383).